The primary structure comprises 305 residues: Phosphatidylglycerol--prolipoprotein diacylglyceryl transferase (305 aa).

Transmembrane regions (helical) follow at residues 10–30 (FLIS…GAII), 59–79 (LMLG…AFEW), and 92–112 (LTTG…STVI). R140 provides a ligand contact to a 1,2-diacyl-sn-glycero-3-phospho-(1'-sn-glycerol). The next 2 helical transmembrane spans lie at 182–202 (LFHP…GILL) and 260–280 (IRVA…LIFL).

The protein belongs to the Lgt family.

Its subcellular location is the cell membrane. It catalyses the reaction L-cysteinyl-[prolipoprotein] + a 1,2-diacyl-sn-glycero-3-phospho-(1'-sn-glycerol) = an S-1,2-diacyl-sn-glyceryl-L-cysteinyl-[prolipoprotein] + sn-glycerol 1-phosphate + H(+). The protein operates within protein modification; lipoprotein biosynthesis (diacylglyceryl transfer). Catalyzes the transfer of the diacylglyceryl group from phosphatidylglycerol to the sulfhydryl group of the N-terminal cysteine of a prolipoprotein, the first step in the formation of mature lipoproteins. The polypeptide is Phosphatidylglycerol--prolipoprotein diacylglyceryl transferase (Chloroflexus aggregans (strain MD-66 / DSM 9485)).